The primary structure comprises 350 residues: dTDP-D-glucose 4,6-dehydratase (350 aa).

Residue threonine 142 participates in substrate binding. Residue aspartate 143 is the Proton donor of the active site. Catalysis depends on proton acceptor residues glutamate 144 and tyrosine 166.

It belongs to the NAD(P)-dependent epimerase/dehydratase family. dTDP-glucose dehydratase subfamily. NAD(+) serves as cofactor.

It catalyses the reaction dTDP-alpha-D-glucose = dTDP-4-dehydro-6-deoxy-alpha-D-glucose + H2O. This chain is dTDP-D-glucose 4,6-dehydratase (TGDS), found in Homo sapiens (Human).